A 342-amino-acid polypeptide reads, in one-letter code: Ribosomal RNA small subunit methyltransferase C (342 aa).

This sequence belongs to the methyltransferase superfamily. RsmC family. Monomer.

The protein resides in the cytoplasm. The catalysed reaction is guanosine(1207) in 16S rRNA + S-adenosyl-L-methionine = N(2)-methylguanosine(1207) in 16S rRNA + S-adenosyl-L-homocysteine + H(+). Specifically methylates the guanine in position 1207 of 16S rRNA in the 30S particle. This is Ribosomal RNA small subunit methyltransferase C from Salmonella paratyphi B (strain ATCC BAA-1250 / SPB7).